The primary structure comprises 86 residues: Kappa-theraphotoxin-Cg1a 5 (86 aa).

Residues 1-21 form the signal peptide; sequence MKVSVLITLAVLGVMFVWTSA. Positions 22–50 are excised as a propeptide; it reads AELEERGSDQRDSPAWLKSMERIFQSEER. 3 disulfides stabilise this stretch: cysteine 52-cysteine 66, cysteine 59-cysteine 71, and cysteine 65-cysteine 78. Phenylalanine 84 carries the post-translational modification Phenylalanine amide.

Belongs to the neurotoxin 10 (Hwtx-1) family. 28 (Jztx-11) subfamily. As to expression, expressed by the venom gland.

The protein resides in the secreted. Functionally, this toxin acts as a voltage-dependent gating-modifier. It inhibits the sodium conductance (IC(50)=124 nM) and slows the fast inactivation (EC(50)=1180 nM) of Nav1.5/SCN5A. It significantly shifts the activation to more depolarized voltages and decreases the deactivation of Nav1.5 currents upon extreme depolarization, but only slightly affects voltage-dependence of steady-state inactivation. In addition, this toxin causes an approximately five-fold decrease in the rate of recovery from inactivation and an approximately 1.9-fold reduction in the closed-state inactivation rate. This toxin integrates the functions of site 3 toxins (alpha-scorpion toxins) with site 4 toxins (beta-scorpion and spider toxins) by targeting multiple sites on Nav1.5. Also shows inhibition of voltage-gated potassium channels (5 uM completely inhibits Kv2.1/KCNB1, whereas 5 uM moderately inhibits Kv4.2/KCND2 Kv4.1/KCND1 channels). The chain is Kappa-theraphotoxin-Cg1a 5 from Chilobrachys guangxiensis (Chinese earth tiger tarantula).